Reading from the N-terminus, the 163-residue chain is Augmin complex subunit wac (163 aa).

Residues 86–115 are a coiled coil; sequence ELQRILSSIEEATRDVVMLERFNAAAEERL.

As to quaternary structure, component of the augmin complex composed of dgt2, dgt3, dgt4, dgt5, dgt6, msd1, msd5 and wac. The complex interacts directly or indirectly with microtubules and is required for centrosome-independent generation of spindle microtubules. wac interacts directly (via coiled coil) with dgt2. As to expression, in adult females, detected only in the abdomen with no expression in the head or thorax (at protein level).

The protein resides in the cytoplasm. Its subcellular location is the cytoskeleton. It localises to the spindle. It is found in the spindle pole. Its function is as follows. As part of the augmin complex, plays a role in centrosome-independent generation of spindle microtubules. The complex is required for mitotic spindle assembly through its involvement in localizing gamma-tubulin to spindle microtubules. wac is dispensable for somatic mitosis and for assembly of spindle microtubules in oocytes during female meiosis but is required during female meiosis for chromosome alignment and segregation. It is required for microtubule assembly near spindle poles in oocytes. It is also required for acentrosomal microtubule nucleation and meiotic spindle formation during male meiosis. wac binds to microtubules in vitro. The protein is Augmin complex subunit wac of Drosophila melanogaster (Fruit fly).